A 235-amino-acid chain; its full sequence is uncharacterized protein (235 aa).

The N-terminal stretch at 1 to 24 (MSDRMKLKGLLAFCLLFLSSFVLA) is a signal peptide.

This is an uncharacterized protein from Haemophilus influenzae (strain ATCC 51907 / DSM 11121 / KW20 / Rd).